A 152-amino-acid polypeptide reads, in one-letter code: MRSNPMTLRLNDLKPADGARTQRTRVGRGIGSGLGKTAGRGHKGSFARKGGGKIKAGFEGGQTPMQRRLPKIGFRSKMARDTAEVLSYQLDKLDAGDVDFVALRAANLVPSRAKKAKIVLKGELSKKFVLKGVAATAGAKAAIEAAGGSVEE.

Residues 1-66 (MRSNPMTLRL…GFEGGQTPMQ (66 aa)) form a disordered region. Residues 28-38 (RGIGSGLGKTA) show a composition bias toward gly residues. Positions 39–52 (GRGHKGSFARKGGG) are enriched in basic residues.

This sequence belongs to the universal ribosomal protein uL15 family. In terms of assembly, part of the 50S ribosomal subunit.

Functionally, binds to the 23S rRNA. This Xanthomonas oryzae pv. oryzae (strain KACC10331 / KXO85) protein is Large ribosomal subunit protein uL15.